An 83-amino-acid polypeptide reads, in one-letter code: Late seed maturation protein P8B6 (83 aa).

Basic and acidic residues-rich tracts occupy residues 1–18 and 37–51; these read MASQQEKKQLDERAKKGE and AEGRSRGGNTRKEQL. The disordered stretch occupies residues 1–83; it reads MASQQEKKQL…DAEDEPSTRT (83 aa). Acidic residues predominate over residues 73-83; the sequence is EDAEDEPSTRT.

It belongs to the small hydrophilic plant seed protein family.

It is found in the cytoplasm. Functionally, this protein may play a role in equipping the seed for survival, maintaining a minimal level of hydration in the dry organism and preventing the denaturation of cytoplasmic components, or may play a role during imbibition by controlling water uptake. This Raphanus sativus (Radish) protein is Late seed maturation protein P8B6.